We begin with the raw amino-acid sequence, 247 residues long: Acidic leucine-rich nuclear phosphoprotein 32 family member A (247 aa).

At Thr-15 the chain carries Phosphothreonine. A Phosphoserine modification is found at Ser-17. 4 LRR repeats span residues 18 to 41, 43 to 64, 65 to 87, and 89 to 110; these read DVKELVLDNCRSIEGKIEGLTDEF, ELEFLSTINVGLTSISNLPKLN, KLKKLELSENRISGDLEVLAEKC, and NLKHLNLSGNKIKDLSTIEPLK. Residues 123–161 enclose the LRRCT domain; the sequence is CEVTNLNAYRENVFKLLPQVMYLDGYDRDNKEAPDSDVE. The tract at residues 150 to 172 is necessary for tumor-suppressive function; that stretch reads RDNKEAPDSDVEGYVEDDDEEDE. The interval 150–247 is disordered; it reads RDNKEAPDSD…EPDDEGQEDD (98 aa). Residues 157-230 are compositionally biased toward acidic residues; it reads DSDVEGYVED…EDEEDAAEEE (74 aa). Ser-158 and Ser-202 each carry phosphoserine. Residues 165–247 form an interaction with E4F1 region; it reads EDDDEEDEDE…EPDDEGQEDD (83 aa).

This sequence belongs to the ANP32 family. Component of the SET complex, composed of at least ANP32A, APEX1, HMGB2, NME1, SET and TREX1. Directly interacts with SET. Interacts with ATXN1/SCA1. Interacts with MAP1B. Interacts with ELAVL1. Part of the INHAT (inhibitor of histone acetyltransferases) complex. Interacts with E4F1. Phosphorylated on serine residues, at least in part by casein kinase 2/CK2. Post-translationally, some glutamate residues are glycylated by TTLL8. This modification occurs exclusively on glutamate residues and results in a glycine chain on the gamma-carboxyl group. In terms of tissue distribution, widely distributed in the central nervous system, with an abundant expression in the cerebellum.

Its subcellular location is the nucleus. The protein localises to the cytoplasm. It localises to the endoplasmic reticulum. Functionally, multifunctional protein that is involved in the regulation of many processes including tumor suppression, apoptosis, cell cycle progression or transcription. Promotes apoptosis by favouring the activation of caspase-9/CASP9 and allowing apoptosome formation. In addition, plays a role in the modulation of histone acetylation and transcription as part of the INHAT (inhibitor of histone acetyltransferases) complex. Inhibits the histone-acetyltranferase activity of EP300/CREBBP (CREB-binding protein) and EP300/CREBBP-associated factor by histone masking. Preferentially binds to unmodified histone H3 and sterically inhibiting its acetylation and phosphorylation leading to cell growth inhibition. Participates in other biochemical processes such as regulation of mRNA nuclear-to-cytoplasmic translocation and stability by its association with ELAVL1 (Hu-antigen R). Plays a role in E4F1-mediated transcriptional repression as well as inhibition of protein phosphatase 2A. The polypeptide is Acidic leucine-rich nuclear phosphoprotein 32 family member A (Anp32a) (Rattus norvegicus (Rat)).